A 360-amino-acid chain; its full sequence is Lipid-A-disaccharide synthase (360 aa).

It belongs to the LpxB family.

It catalyses the reaction a lipid X + a UDP-2-N,3-O-bis[(3R)-3-hydroxyacyl]-alpha-D-glucosamine = a lipid A disaccharide + UDP + H(+). It functions in the pathway bacterial outer membrane biogenesis; LPS lipid A biosynthesis. Functionally, condensation of UDP-2,3-diacylglucosamine and 2,3-diacylglucosamine-1-phosphate to form lipid A disaccharide, a precursor of lipid A, a phosphorylated glycolipid that anchors the lipopolysaccharide to the outer membrane of the cell. The sequence is that of Lipid-A-disaccharide synthase from Helicobacter pylori (strain G27).